Reading from the N-terminus, the 241-residue chain is Octanoyltransferase (241 aa).

A BPL/LPL catalytic domain is found at 50–238 (KIAHEQVWLL…AFEQIFGPTI (189 aa)). Residues 89 to 96 (RGGEFTYH), 169 to 171 (AIG), and 182 to 184 (GIS) contribute to the substrate site. C200 acts as the Acyl-thioester intermediate in catalysis.

It belongs to the LipB family.

It localises to the cytoplasm. It catalyses the reaction octanoyl-[ACP] + L-lysyl-[protein] = N(6)-octanoyl-L-lysyl-[protein] + holo-[ACP] + H(+). It functions in the pathway protein modification; protein lipoylation via endogenous pathway; protein N(6)-(lipoyl)lysine from octanoyl-[acyl-carrier-protein]: step 1/2. Functionally, catalyzes the transfer of endogenously produced octanoic acid from octanoyl-acyl-carrier-protein onto the lipoyl domains of lipoate-dependent enzymes. Lipoyl-ACP can also act as a substrate although octanoyl-ACP is likely to be the physiological substrate. The polypeptide is Octanoyltransferase (Bartonella bacilliformis (strain ATCC 35685 / KC583 / Herrer 020/F12,63)).